We begin with the raw amino-acid sequence, 643 residues long: MPDRLVSATLALRDDGTLVSPEFGELHRGASGTLARAHRTFVAGNGLPARWQRRRTFTIVTTAFGAGAGFLAAWAAWRDDPARCERLHVVAVEPHPFSRDDLHRAVSHMVVDTTISADVDALLDAWPILVPGLHRLEFDEGRVVLTLAFGDTIDLLKKLVARADAFFLDGAAASGDGIRALAKLAGEHATFATHAKSDDVKHALGETGFTFREVDDRLVGDYAPRWRARRHEPPRALPVAARRAIVIGAGLAGCAVVERLAARGWDVTLIERHERIASEASGNPAGVFHPLMTRDDNVASRLTRGGFLHALARWRALERAGHAFSRSTHGMLHLAESADDFARMRDAFDAFGPPSDYATLLDADAARAHLNLPVAQGGLLFPHGGAVWPAGLCVAQYAAAGERVRLLASTCVARLERRDDTWHALDDTGATLADAPVVVLANAGDAARLAGLRHVTLQPVRGQLTLLPPGTTAPLPCPAIGDGYAVPLDDGTLLIGATFEPDDTDPAMRAAGHAENLDRVRHLLPGLIGALPDPATLRGRVAFRWVVGDRLPLIGPLADETQATANARALGGAQARDLPRMPGLYGAFGFGSRGLVWAALGAELIASQLEGEPWPLERELADAVDPARFLIRALRARRVGSAG.

The segment at 1 to 223 is tRNA (mnm(5)s(2)U34)-methyltransferase; the sequence is MPDRLVSATL…VDDRLVGDYA (223 aa). The FAD-dependent cmnm(5)s(2)U34 oxidoreductase stretch occupies residues 247 to 643; it reads IGAGLAGCAV…LRARRVGSAG (397 aa).

It in the N-terminal section; belongs to the methyltransferase superfamily. tRNA (mnm(5)s(2)U34)-methyltransferase family. The protein in the C-terminal section; belongs to the DAO family. Requires FAD as cofactor.

It localises to the cytoplasm. It catalyses the reaction 5-aminomethyl-2-thiouridine(34) in tRNA + S-adenosyl-L-methionine = 5-methylaminomethyl-2-thiouridine(34) in tRNA + S-adenosyl-L-homocysteine + H(+). Its function is as follows. Catalyzes the last two steps in the biosynthesis of 5-methylaminomethyl-2-thiouridine (mnm(5)s(2)U) at the wobble position (U34) in tRNA. Catalyzes the FAD-dependent demodification of cmnm(5)s(2)U34 to nm(5)s(2)U34, followed by the transfer of a methyl group from S-adenosyl-L-methionine to nm(5)s(2)U34, to form mnm(5)s(2)U34. This Burkholderia cenocepacia (strain HI2424) protein is tRNA 5-methylaminomethyl-2-thiouridine biosynthesis bifunctional protein MnmC.